A 76-amino-acid polypeptide reads, in one-letter code: MLYPPLNQLTSKVSSKYLIATVAAKRARELYDKPETALLEHYHSVKTVGKALEEIAAGKITPIEPELNESEFETKD.

It belongs to the RNA polymerase subunit omega family. The RNAP catalytic core consists of 2 alpha, 1 beta, 1 beta' and 1 omega subunit. When a sigma factor is associated with the core the holoenzyme is formed, which can initiate transcription.

It catalyses the reaction RNA(n) + a ribonucleoside 5'-triphosphate = RNA(n+1) + diphosphate. Promotes RNA polymerase assembly. Latches the N- and C-terminal regions of the beta' subunit thereby facilitating its interaction with the beta and alpha subunits. The polypeptide is DNA-directed RNA polymerase subunit omega (Staphylococcus carnosus (strain TM300)).